A 284-amino-acid polypeptide reads, in one-letter code: Deoxyribonuclease-1 (284 aa).

The first 22 residues, 1 to 22 (MRYTGLMGILLTLVNLLQLAAT), serve as a signal peptide directing secretion. N-linked (GlcNAc...) asparagine glycosylation occurs at Asn40. The active site involves Glu100. A disulfide bridge links Cys123 with Cys126. Asn128 is a glycosylation site (N-linked (GlcNAc...) asparagine). His156 is a catalytic residue. Cys195 and Cys231 form a disulfide bridge.

The protein belongs to the DNase I family. It depends on Ca(2+) as a cofactor. Requires Mg(2+) as cofactor.

It localises to the secreted. The protein localises to the zymogen granule. It is found in the nucleus envelope. The enzyme catalyses Endonucleolytic cleavage to 5'-phosphodinucleotide and 5'-phosphooligonucleotide end-products.. In terms of biological role, serum endocuclease secreted into body fluids by a wide variety of exocrine and endocrine organs. Expressed by non-hematopoietic tissues and preferentially cleaves protein-free DNA. Among other functions, seems to be involved in cell death by apoptosis. Binds specifically to G-actin and blocks actin polymerization. Together with DNASE1L3, plays a key role in degrading neutrophil extracellular traps (NETs). NETs are mainly composed of DNA fibers and are released by neutrophils to bind pathogens during inflammation. Degradation of intravascular NETs by DNASE1 and DNASE1L3 is required to prevent formation of clots that obstruct blood vessels and cause organ damage following inflammation. In Rattus norvegicus (Rat), this protein is Deoxyribonuclease-1 (Dnase1).